The chain runs to 414 residues: 3-isopropylmalate dehydratase large subunit (414 aa).

[4Fe-4S] cluster is bound by residues Cys295, Cys353, and Cys356.

It belongs to the aconitase/IPM isomerase family. LeuC type 2 subfamily. Heterodimer of LeuC and LeuD. [4Fe-4S] cluster serves as cofactor.

The enzyme catalyses (2R,3S)-3-isopropylmalate = (2S)-2-isopropylmalate. It functions in the pathway amino-acid biosynthesis; L-leucine biosynthesis; L-leucine from 3-methyl-2-oxobutanoate: step 2/4. Its function is as follows. Catalyzes the isomerization between 2-isopropylmalate and 3-isopropylmalate, via the formation of 2-isopropylmaleate. The polypeptide is 3-isopropylmalate dehydratase large subunit (Pyrobaculum islandicum (strain DSM 4184 / JCM 9189 / GEO3)).